The chain runs to 379 residues: Cytochrome b (379 aa).

Transmembrane regions (helical) follow at residues 34–54 (YGSL…FLSM), 78–99 (WLLR…YLHA), 114–134 (WNIG…GYVL), and 179–199 (FFAF…LHIM). Heme b is bound by residues H84 and H98. H183 and H197 together coordinate heme b. Residue H202 participates in a ubiquinone binding. 4 consecutive transmembrane segments (helical) span residues 227-247 (IKDT…VLFE), 289-309 (LGGV…PLTS), 321-341 (LNKT…WIGG), and 349-369 (IIIG…SPTI).

This sequence belongs to the cytochrome b family. In terms of assembly, the main subunits of complex b-c1 are: cytochrome b, cytochrome c1 and the Rieske protein. Requires heme b as cofactor.

Its subcellular location is the mitochondrion inner membrane. In terms of biological role, component of the ubiquinol-cytochrome c reductase complex (complex III or cytochrome b-c1 complex) that is part of the mitochondrial respiratory chain. The b-c1 complex mediates electron transfer from ubiquinol to cytochrome c. Contributes to the generation of a proton gradient across the mitochondrial membrane that is then used for ATP synthesis. The chain is Cytochrome b (MT-CYB) from Lumbricus terrestris (Common earthworm).